A 591-amino-acid polypeptide reads, in one-letter code: V-type ATP synthase alpha chain (591 aa).

Position 242-249 (242-249 (GPFGAGKT)) interacts with ATP.

This sequence belongs to the ATPase alpha/beta chains family.

The catalysed reaction is ATP + H2O + 4 H(+)(in) = ADP + phosphate + 5 H(+)(out). Its function is as follows. Produces ATP from ADP in the presence of a proton gradient across the membrane. The V-type alpha chain is a catalytic subunit. The sequence is that of V-type ATP synthase alpha chain (atpA) from Chlamydia muridarum (strain MoPn / Nigg).